The primary structure comprises 101 residues: Small ribosomal subunit protein uS14 (101 aa).

The protein belongs to the universal ribosomal protein uS14 family. In terms of assembly, part of the 30S ribosomal subunit. Contacts proteins S3 and S10.

Functionally, binds 16S rRNA, required for the assembly of 30S particles and may also be responsible for determining the conformation of the 16S rRNA at the A site. The chain is Small ribosomal subunit protein uS14 from Rhizorhabdus wittichii (strain DSM 6014 / CCUG 31198 / JCM 15750 / NBRC 105917 / EY 4224 / RW1) (Sphingomonas wittichii).